Consider the following 185-residue polypeptide: Probable chorismate pyruvate-lyase (185 aa).

Substrate is bound by residues arginine 84, leucine 122, and glutamate 178.

Belongs to the UbiC family.

The protein localises to the cytoplasm. It catalyses the reaction chorismate = 4-hydroxybenzoate + pyruvate. It participates in cofactor biosynthesis; ubiquinone biosynthesis. Its function is as follows. Removes the pyruvyl group from chorismate, with concomitant aromatization of the ring, to provide 4-hydroxybenzoate (4HB) for the ubiquinone pathway. This is Probable chorismate pyruvate-lyase from Hydrogenovibrio crunogenus (strain DSM 25203 / XCL-2) (Thiomicrospira crunogena).